Here is a 105-residue protein sequence, read N- to C-terminus: Nucleoid-associated protein Ccur92_18190 (105 aa).

This sequence belongs to the YbaB/EbfC family. As to quaternary structure, homodimer.

It is found in the cytoplasm. The protein localises to the nucleoid. Functionally, binds to DNA and alters its conformation. May be involved in regulation of gene expression, nucleoid organization and DNA protection. This is Nucleoid-associated protein Ccur92_18190 from Campylobacter curvus (strain 525.92).